A 306-amino-acid chain; its full sequence is uncharacterized protein (306 aa).

This is an uncharacterized protein from Saccharomyces cerevisiae (strain ATCC 204508 / S288c) (Baker's yeast).